The following is a 993-amino-acid chain: Nisin biosynthesis protein NisB (993 aa).

Residues 838–851 form a helical membrane-spanning segment; sequence AIFCADSKIIPNLL.

It to B.subtilis SpaB and S.epidermidis EpiB.

Its subcellular location is the cell membrane. Functionally, involved in the post-translational modification of the lantibiotic nisin. The chain is Nisin biosynthesis protein NisB (nisB) from Lactococcus lactis subsp. lactis (Streptococcus lactis).